Reading from the N-terminus, the 708-residue chain is Ubiquitin thioesterase ZRANB1 (708 aa).

A RanBP2-type 1 zinc finger spans residues 3–33 (ERGIKWACEYCTYENWPSAIKCTMCRAQRPS). Cysteine 10, cysteine 13, cysteine 24, and cysteine 27 together coordinate Zn(2+). Residues 38-73 (TEDPFKSGSSDVGRDWDPSSTEGGSSPLICPDSSAR) are disordered. 2 consecutive RanBP2-type zinc fingers follow at residues 84–113 (NANK…QRRT) and 149–178 (RTQH…PRPN). Cysteine 90, cysteine 93, cysteine 104, cysteine 107, cysteine 155, cysteine 158, cysteine 169, and cysteine 172 together coordinate Zn(2+). The tract at residues 200–223 (RARWRGSCSSGNSQRRSPPTMKRD) is disordered. Over residues 206–216 (SCSSGNSQRRS) the composition is skewed to polar residues. 2 ANK repeats span residues 260–290 (KKTD…SGGD) and 313–340 (YTLV…QQAA). The OTU domain occupies 432-592 (LYALWNRTAG…RGHFSALVAM (161 aa)). The Nucleophile role is filled by cysteine 443. The active-site Proton acceptor is the histidine 585.

It belongs to the peptidase C64 family. As to quaternary structure, interacts with TRAF6. Interacts with APC.

It localises to the cytoplasm. The protein localises to the nucleus. The catalysed reaction is Thiol-dependent hydrolysis of ester, thioester, amide, peptide and isopeptide bonds formed by the C-terminal Gly of ubiquitin (a 76-residue protein attached to proteins as an intracellular targeting signal).. Ubiquitin thioesterase, which specifically hydrolyzes 'Lys-29'-linked and 'Lys-33'-linked diubiquitin. Also cleaves 'Lys-63'-linked chains, but with 40-fold less efficiency compared to 'Lys-29'-linked ones. Positive regulator of the Wnt signaling pathway that deubiquitinates APC protein, a negative regulator of Wnt-mediated transcription. Acts as a regulator of autophagy by mediating deubiquitination of PIK3C3/VPS34, thereby promoting autophagosome maturation. Plays a role in the regulation of cell morphology and cytoskeletal organization. Required in the stress fiber dynamics and cell migration. This chain is Ubiquitin thioesterase ZRANB1, found in Bos taurus (Bovine).